Here is a 428-residue protein sequence, read N- to C-terminus: Histidinol dehydrogenase (428 aa).

The NAD(+) site is built by Tyr127, Gln189, and Asn212. Residues Ser235, Gln257, and His260 each contribute to the substrate site. The Zn(2+) site is built by Gln257 and His260. Active-site proton acceptor residues include Glu325 and His326. Positions 326, 359, 413, and 418 each coordinate substrate. Asp359 provides a ligand contact to Zn(2+). His418 is a Zn(2+) binding site.

The protein belongs to the histidinol dehydrogenase family. Requires Zn(2+) as cofactor.

It catalyses the reaction L-histidinol + 2 NAD(+) + H2O = L-histidine + 2 NADH + 3 H(+). It functions in the pathway amino-acid biosynthesis; L-histidine biosynthesis; L-histidine from 5-phospho-alpha-D-ribose 1-diphosphate: step 9/9. Its function is as follows. Catalyzes the sequential NAD-dependent oxidations of L-histidinol to L-histidinaldehyde and then to L-histidine. The sequence is that of Histidinol dehydrogenase from Prochlorococcus marinus subsp. pastoris (strain CCMP1986 / NIES-2087 / MED4).